Reading from the N-terminus, the 477-residue chain is MVTATATATNVGYITQVIGPVIDAEFPSGKLPEIYNALKVEATTESGLKVKVTFEVQQLLGDNRVRAVAMSSTDGLVRGMPVVDTGAPITVPVGEATLGRIFNVLGEPVDQGEPVQAKEFAPIHRSAPPFVELTVKPEPFETGIKVIDLLAPFKRGGKVGLFGGAGVGKTVLIQELIHNIAEEHSGLSVFAGVGERTREGNDLYNEMKESGVLDKVALVYGQMNEPPGARMRVGLTALTMAEYFRDVNKQDVLLFIDNIFRFVQAGSEVSALLGRMPSAVGYQPTLATEMGNLQERITSTKQGSITSVQAVYVPADDLTDPAPATTFAHLDSTVVLSRSLAAKGIYPAVDPLDSSSTILQADIVGEEHYNTAQAVKQTLQRYKELQDIIAILGLDELSEEDKLVVARARRIERFLSQPFFVAEVFTGSPGKYVKLEDTIKGFQRILSGELDHLPEQAFYLVGTIEEAIEKAEKLKSK.

Position 163–170 (163–170 (GGAGVGKT)) interacts with ATP.

It belongs to the ATPase alpha/beta chains family. F-type ATPases have 2 components, CF(1) - the catalytic core - and CF(0) - the membrane proton channel. CF(1) has five subunits: alpha(3), beta(3), gamma(1), delta(1), epsilon(1). CF(0) has four main subunits: a(1), b(1), b'(1) and c(9-12).

The protein localises to the cellular thylakoid membrane. The enzyme catalyses ATP + H2O + 4 H(+)(in) = ADP + phosphate + 5 H(+)(out). Produces ATP from ADP in the presence of a proton gradient across the membrane. The catalytic sites are hosted primarily by the beta subunits. The polypeptide is ATP synthase subunit beta (Synechococcus sp. (strain JA-3-3Ab) (Cyanobacteria bacterium Yellowstone A-Prime)).